The chain runs to 576 residues: Probable DNA ligase (576 aa).

Glutamate 235 contributes to the ATP binding site. Lysine 237 serves as the catalytic N6-AMP-lysine intermediate. Positions 242, 257, 285, 324, 422, and 428 each coordinate ATP.

This sequence belongs to the ATP-dependent DNA ligase family. Mg(2+) serves as cofactor.

The enzyme catalyses ATP + (deoxyribonucleotide)n-3'-hydroxyl + 5'-phospho-(deoxyribonucleotide)m = (deoxyribonucleotide)n+m + AMP + diphosphate.. Functionally, DNA ligase that seals nicks in double-stranded DNA during DNA replication, DNA recombination and DNA repair. The sequence is that of Probable DNA ligase from Koribacter versatilis (strain Ellin345).